The primary structure comprises 876 residues: Serrate RNA effector molecule homolog (876 aa).

The disordered stretch occupies residues 1 to 90 (MGDSDDEYDR…RRDWDEHSSD (90 aa)). G2 carries the N-acetylglycine modification. S4 bears the Phosphoserine mark. Y8 is modified (phosphotyrosine). Positions 8–73 (YDRRRRDKFR…ERFSPPRHEL (66 aa)) are enriched in basic and acidic residues. Phosphoserine is present on residues S67, S74, and S136. K150 participates in a covalent cross-link: Glycyl lysine isopeptide (Lys-Gly) (interchain with G-Cter in SUMO2). The segment at 271 to 412 (EEEEEQAGKP…KPKDAAGLEC (142 aa)) is disordered. The span at 297–347 (DGERKTNDKDEKKEDGKQAENDSSNDDKTKKSEGDGDKEEKKEDSEKEAKK) shows a compositional bias: basic and acidic residues. Positions 370–387 (SESESESGQAEEEKEEAE) are enriched in acidic residues. Over residues 388–412 (EALKEKEKPKEEEWEKPKDAAGLEC) the composition is skewed to basic and acidic residues. A phosphoserine mark is found at S493 and S540. A Phosphothreonine modification is found at T544. Phosphoserine is present on S570. Residues 575–598 (ELLGSSGGAPPEEPPKEGNPAEIN) form a disordered region. Residue T671 is modified to Phosphothreonine. S679 carries the post-translational modification Phosphoserine. Omega-N-methylarginine is present on residues R833, R840, and R850. The tract at residues 835-854 (NYDAFRGQGGYPGKPRNRMV) is disordered.

Belongs to the ARS2 family. As to quaternary structure, interacts with NCBP1 and DROSHA. Interacts with CASP8AP2 and ERBB4. Interacts with LUZP4. Interacts with NCBP2/CBP20 and NCBP3. Interacts with MTREX. As to expression, ubiquitously expressed.

Its subcellular location is the nucleus. It localises to the nucleoplasm. The protein localises to the cytoplasm. Functionally, acts as a mediator between the cap-binding complex (CBC) and the primary microRNAs (miRNAs) processing machinery during cell proliferation. Contributes to the stability and delivery of capped primary miRNA transcripts to the primary miRNA processing complex containing DGCR8 and DROSHA, thereby playing a role in RNA-mediated gene silencing (RNAi) by miRNAs. Binds capped RNAs (m7GpppG-capped RNA); however interaction is probably mediated via its interaction with NCBP1/CBP80 component of the CBC complex. Involved in cell cycle progression at S phase. Does not directly confer arsenite resistance but rather modulates arsenic sensitivity. Independently of its activity on miRNAs, necessary and sufficient to promote neural stem cell self-renewal. Does so by directly binding SOX2 promoter and positively regulating its transcription. The chain is Serrate RNA effector molecule homolog (SRRT) from Homo sapiens (Human).